The chain runs to 599 residues: Serine/threonine-protein kinase haspin homolog (599 aa).

The region spanning 287-599 is the Protein kinase domain; it reads PESIVKIGEG…FSDMLMDQIS (313 aa). Residues 293 to 301, K310, 407 to 412, 448 to 453, and 486 to 488 each bind ATP; these read IGEGTYGEA, EHGGKD, DLHWGN, and DFT. Residue D448 is the Proton acceptor of the active site.

Belongs to the protein kinase superfamily. Ser/Thr protein kinase family. Haspin subfamily. As to expression, expressed in meristems and primordia of root tips, lateral roots, shoot apex, leaves and flowers.

It localises to the cytoplasm. The protein localises to the perinuclear region. The protein resides in the nucleus. Its subcellular location is the chromosome. It is found in the cytoskeleton. It localises to the phragmoplast. It catalyses the reaction L-seryl-[protein] + ATP = O-phospho-L-seryl-[protein] + ADP + H(+). The catalysed reaction is L-threonyl-[protein] + ATP = O-phospho-L-threonyl-[protein] + ADP + H(+). Its function is as follows. Threonine-protein kinase that phosphorylates histone H3 in vitro at 'Thr-3' (H3T3ph) and 'Thr-11' (H3T11ph), but not at 'Ser-10' (H3S10ph) or 'Ser-28' (H3S28ph). Plays a role in mitotic cell division during plant growth. Threonine-protein kinase that phosphorylates histone H3 in vitro at 'Thr-3' (H3T3ph), but not at 'Thr-11' (H3T11ph), 'Ser-10' (H3S10ph) or 'Ser-28' (H3S28ph). Involved in histone H3 phosphorylation in mitotic cells. Contributes to organ and plant development, as well as embryonic patterning. The protein is Serine/threonine-protein kinase haspin homolog of Arabidopsis thaliana (Mouse-ear cress).